We begin with the raw amino-acid sequence, 425 residues long: Serine/threonine transporter SstT (425 aa).

The next 9 helical transmembrane spans lie at 11-31 (FLNGSLVLQIVIGIVAGLILA), 43-63 (FLGSLFVSALKAVAPILVFVL), 91-111 (LFAASTAVMVSYFFPTTLVLV), 141-161 (ALVSGNFIGILAWAAGLGFAL), 182-202 (IVHLVIRFAPLGIFGLVAGTI), 216-236 (LLAVLLGCMILIALVINPIIV), 290-310 (IPLGATINMAGASITITVLTL), 316-336 (LGIEFDIATAILLSVVAAVSA), and 363-383 (VAMQVVAIGFIIGVVQDSAET).

Belongs to the dicarboxylate/amino acid:cation symporter (DAACS) (TC 2.A.23) family.

The protein resides in the cell inner membrane. The catalysed reaction is L-serine(in) + Na(+)(in) = L-serine(out) + Na(+)(out). It catalyses the reaction L-threonine(in) + Na(+)(in) = L-threonine(out) + Na(+)(out). Its function is as follows. Involved in the import of serine and threonine into the cell, with the concomitant import of sodium (symport system). The protein is Serine/threonine transporter SstT of Psychromonas ingrahamii (strain DSM 17664 / CCUG 51855 / 37).